Here is a 308-residue protein sequence, read N- to C-terminus: D-alanine--D-alanine ligase (308 aa).

Residues 104-301 (KQIWQGSDLP…FDELCVAILE (198 aa)) enclose the ATP-grasp domain. An ATP-binding site is contributed by 130 to 185 (IAELGLPVIIKPVHEGSSVGMSKVEKAEDFAAAIEKATQHDAVVMAEKWITGREFT). Mg(2+)-binding residues include Asp255, Glu268, and Asn270.

The protein belongs to the D-alanine--D-alanine ligase family. The cofactor is Mg(2+). Mn(2+) serves as cofactor.

It is found in the cytoplasm. The catalysed reaction is 2 D-alanine + ATP = D-alanyl-D-alanine + ADP + phosphate + H(+). The protein operates within cell wall biogenesis; peptidoglycan biosynthesis. In terms of biological role, cell wall formation. In Acinetobacter baumannii (strain ACICU), this protein is D-alanine--D-alanine ligase.